Consider the following 365-residue polypeptide: Aminomethyltransferase (365 aa).

The protein belongs to the GcvT family. In terms of assembly, the glycine cleavage system is composed of four proteins: P, T, L and H.

It catalyses the reaction N(6)-[(R)-S(8)-aminomethyldihydrolipoyl]-L-lysyl-[protein] + (6S)-5,6,7,8-tetrahydrofolate = N(6)-[(R)-dihydrolipoyl]-L-lysyl-[protein] + (6R)-5,10-methylene-5,6,7,8-tetrahydrofolate + NH4(+). Functionally, the glycine cleavage system catalyzes the degradation of glycine. The chain is Aminomethyltransferase from Chlorobaculum tepidum (strain ATCC 49652 / DSM 12025 / NBRC 103806 / TLS) (Chlorobium tepidum).